A 184-amino-acid chain; its full sequence is ATP synthase subunit b, chloroplastic (184 aa).

Residues 27–49 (LATNPINLSVVFGVLIFFGKGVL) traverse the membrane as a helical segment.

The protein belongs to the ATPase B chain family. In terms of assembly, F-type ATPases have 2 components, F(1) - the catalytic core - and F(0) - the membrane proton channel. F(1) has five subunits: alpha(3), beta(3), gamma(1), delta(1), epsilon(1). F(0) has four main subunits: a(1), b(1), b'(1) and c(10-14). The alpha and beta chains form an alternating ring which encloses part of the gamma chain. F(1) is attached to F(0) by a central stalk formed by the gamma and epsilon chains, while a peripheral stalk is formed by the delta, b and b' chains.

It localises to the plastid. The protein resides in the chloroplast thylakoid membrane. F(1)F(0) ATP synthase produces ATP from ADP in the presence of a proton or sodium gradient. F-type ATPases consist of two structural domains, F(1) containing the extramembraneous catalytic core and F(0) containing the membrane proton channel, linked together by a central stalk and a peripheral stalk. During catalysis, ATP synthesis in the catalytic domain of F(1) is coupled via a rotary mechanism of the central stalk subunits to proton translocation. Functionally, component of the F(0) channel, it forms part of the peripheral stalk, linking F(1) to F(0). The polypeptide is ATP synthase subunit b, chloroplastic (Lobularia maritima (Sweet alyssum)).